An 880-amino-acid chain; its full sequence is DNA mismatch repair protein MutS (880 aa).

624–631 (GPNMAGKS) is a binding site for ATP.

It belongs to the DNA mismatch repair MutS family.

Its function is as follows. This protein is involved in the repair of mismatches in DNA. It is possible that it carries out the mismatch recognition step. This protein has a weak ATPase activity. In Alkaliphilus metalliredigens (strain QYMF), this protein is DNA mismatch repair protein MutS.